Consider the following 111-residue polypeptide: Large ribosomal subunit protein uL29 (111 aa).

The interval M1–N85 is large ribosomal subunit protein uL29. The tract at residues A86–K111 is unknown.

The protein belongs to the universal ribosomal protein uL29 family.

This chain is Large ribosomal subunit protein uL29, found in Mycoplasma pneumoniae (strain ATCC 29342 / M129 / Subtype 1) (Mycoplasmoides pneumoniae).